Consider the following 246-residue polypeptide: MHRPPLPLVLLLLCCRAQAGEIIGGTESKPHSRPYMAYLEIVTSQEKQVACGGFLIRRDFVLTAAHCAGRSVTVTLGAHNIQKKEDTWQRLEVIKQFPYPKYEPVGVHDIMLLKLKEKANLTLAVGTLPLPPHVTFIRPGRMCQVAGWGRTGVKEPASSTLQEVKLRLMEPRACRHFRAFDHNLQLCVGNPQSTKSAFKGDSGGPLLCAGVAQGIVSYGLSSAKPPAVFTRISPYRPWIDEVLKEN.

Residues 1–19 (MHRPPLPLVLLLLCCRAQA) form the signal peptide. The propeptide at 20-21 (GE) is activation peptide. Residues 22 to 244 (IIGGTESKPH…YRPWIDEVLK (223 aa)) enclose the Peptidase S1 domain. A disulfide bridge connects residues cysteine 51 and cysteine 67. Residues histidine 66 and aspartate 109 each act as charge relay system in the active site. N-linked (GlcNAc...) asparagine glycosylation is present at asparagine 120. Intrachain disulfides connect cysteine 143–cysteine 208 and cysteine 174–cysteine 187. Serine 202 serves as the catalytic Charge relay system.

It belongs to the peptidase S1 family. Granzyme subfamily.

It localises to the secreted. Its subcellular location is the cytoplasmic granule. Functionally, putative mast cell chymase. The sequence is that of Mast cell protease 2 from Ovis aries (Sheep).